The following is a 318-amino-acid chain: Isoflavone reductase (318 aa).

NADP(+)-binding positions include 11 to 17, arginine 36, and lysine 44; that span reads GPTGAIG. Lysine 144 acts as the Proton acceptor in catalysis. NADP(+) is bound at residue arginine 148.

The protein belongs to the NmrA-type oxidoreductase family. Isoflavone reductase subfamily.

The enzyme catalyses (3R)-vestitone + NADP(+) = 2'-hydroxyformononetin + NADPH + 2 H(+). The protein operates within phytoalexin biosynthesis; pterocarpan phytoalexin biosynthesis. Functionally, reduces achiral isoflavones to chiral isoflavanones during the biosynthesis of chiral pterocarpan phytoalexins. The reduction product is a third isomer, which represents the penultimate intermediate in the synthesis of the phytoalexin (-)-medicarpin, the major phytoalexin in Alfalfa. The sequence is that of Isoflavone reductase from Medicago sativa (Alfalfa).